The chain runs to 921 residues: MLGFAKKFFGSSNERKVKAMSARVAQINALEPEYAALSDEALKAKTEEFKARLAKGEPLDSLLVEAFAVVREAGKRVLGMRHFDVQMVGGMVLHGGGISEMRTGEGKTLVATLPTYLNALEGKGVHVITVNDYLAKRDAEWMGQIHNFLGLSYGVIVNGLSQGERQRAYRSDITYGTNNEFGFDYLRDNLVYSVEEMVQRGHHYVIVDEVDSILIDEARTPLIISGPTEDRSEFYKTIDVLVKDLIKDKTNFDHDEKQKQVILTEEGQERIEEILMAGGHLAEDTAGLYDAANISIVHHVNQALRANVLYTFDKDYIVKDDEVILIDEFTGRMMTGRRLSEGLHQAIEAKEGVSVQPENQTLASVTIQNYFRLYKKLAGMTGTAATEAQEFDDIYKMGVSEIPTNRPVLRIDDDDEVYRTEREKNDSILKQITDCHARGQPILVGTVSIEKSEELSRLLATYAWEWEGKKHTGIPHQVLNARFHEQEAGIVADAGVPGAVTIATNMAGRGTDIQLGGNMDMRLANWRQQQKGLGITPTHEDELAQRAELEIEIGAAKARALAAGGLFVLGTERHESRRIDNQLRGRTGRQGDPGRSKFFLSCEDDLLRIFAGERLDAIMRTFGVQEGEAITHKWLNNAIATAQKRVEQRNYEIRKNLLKYDDVVNDQRKAVFEQRQEFMEATDLSDIITEMRHDVIDDFIARYMPPKAYAEQWDIEGLDERVQAILGLTLPLKEWAAEEGFGDEEMRERLNKAADEYAAQREAIITPEQMRSVEKNFLLQMIDLQWREHLMHLDHLRNVIGLRGYGQRDPLNEYKTEAFSLFEKLLGDLRTNTTRWLMTVEIAYAEPEPLHTPEGLVEVHLDPLSGENVATAGALPEGLSPQQREALPVSVLPEGWEYTARNGACPCGSGKKFKHCHGALV.

Residues Gln86, 104–108, and Asp512 each bind ATP; that span reads GEGKT. Cys905, Cys907, Cys916, and His917 together coordinate Zn(2+).

Belongs to the SecA family. Monomer and homodimer. Part of the essential Sec protein translocation apparatus which comprises SecA, SecYEG and auxiliary proteins SecDF-YajC and YidC. It depends on Zn(2+) as a cofactor.

It is found in the cell inner membrane. It localises to the cytoplasm. The catalysed reaction is ATP + H2O + cellular proteinSide 1 = ADP + phosphate + cellular proteinSide 2.. Its function is as follows. Part of the Sec protein translocase complex. Interacts with the SecYEG preprotein conducting channel. Has a central role in coupling the hydrolysis of ATP to the transfer of proteins into and across the cell membrane, serving both as a receptor for the preprotein-SecB complex and as an ATP-driven molecular motor driving the stepwise translocation of polypeptide chains across the membrane. The sequence is that of Protein translocase subunit SecA from Caulobacter sp. (strain K31).